We begin with the raw amino-acid sequence, 420 residues long: Tryptophan synthase beta chain (420 aa).

K112 bears the N6-(pyridoxal phosphate)lysine mark.

Belongs to the TrpB family. As to quaternary structure, tetramer of two alpha and two beta chains. Pyridoxal 5'-phosphate is required as a cofactor.

The enzyme catalyses (1S,2R)-1-C-(indol-3-yl)glycerol 3-phosphate + L-serine = D-glyceraldehyde 3-phosphate + L-tryptophan + H2O. It participates in amino-acid biosynthesis; L-tryptophan biosynthesis; L-tryptophan from chorismate: step 5/5. The beta subunit is responsible for the synthesis of L-tryptophan from indole and L-serine. The chain is Tryptophan synthase beta chain from Thermosipho africanus (strain TCF52B).